The primary structure comprises 1084 residues: Autophagy-related protein 11 (1084 aa).

Coiled coils occupy residues 585–739 and 847–879; these read VQNL…LTES and VIRRFNDIESLAKKLRKENKNKKILLQKYTNDK. Disordered regions lie at residues 925-961 and 973-1007; these read SMIPPRVIPNRVEPASNTNNSNPSSVPEDMGSPNMNR and NIGSNNSNNNYVNTGNANGNNKPETNIDTTSSTNA. Low complexity-rich tracts occupy residues 940-949 and 973-993; these read SNTNNSNPSS and NIGSNNSNNNYVNTGNANGNN. Over residues 994 to 1007 the composition is skewed to polar residues; that stretch reads KPETNIDTTSSTNA.

This sequence belongs to the ATG11 family. As to quaternary structure, homodimer and potential homooligomers. Interacts with ATG1 kinase and the ATG19 and ATG34 cargo protein transporters. Interacts with ATG9, ATG17 and ATG20.

The protein localises to the preautophagosomal structure membrane. Its subcellular location is the vacuole membrane. Involved in cytoplasm to vacuole transport (Cvt), pexophagy, mitophagy and nucleophagy. Recruits mitochondria for their selective degradation via autophagy (mitophagy) during starvation, through its interaction with ATG32. Works as scaffold proteins that recruit ATG proteins to the pre-autophagosome (PAS), the site of vesicle/autophagosome formation. Required for ATG9 anterograde transport from the mitochondria to the PAS. Also recruits the ATG19-prAPE1 complex to the PAS. Required for the Cvt vesicles completion. This Kluyveromyces marxianus (strain DMKU3-1042 / BCC 29191 / NBRC 104275) (Yeast) protein is Autophagy-related protein 11.